Consider the following 515-residue polypeptide: Histidine ammonia-lyase (515 aa).

Residues 145–147 (ASG) constitute a cross-link (5-imidazolinone (Ala-Gly)). Ser-146 is subject to 2,3-didehydroalanine (Ser).

Belongs to the PAL/histidase family. Post-translationally, contains an active site 4-methylidene-imidazol-5-one (MIO), which is formed autocatalytically by cyclization and dehydration of residues Ala-Ser-Gly.

It is found in the cytoplasm. It catalyses the reaction L-histidine = trans-urocanate + NH4(+). Its pathway is amino-acid degradation; L-histidine degradation into L-glutamate; N-formimidoyl-L-glutamate from L-histidine: step 1/3. This Gluconacetobacter diazotrophicus (strain ATCC 49037 / DSM 5601 / CCUG 37298 / CIP 103539 / LMG 7603 / PAl5) protein is Histidine ammonia-lyase.